A 409-amino-acid polypeptide reads, in one-letter code: Dihydrolipoyllysine-residue succinyltransferase component of 2-oxoglutarate dehydrogenase complex (409 aa).

Residues 2 to 77 (AIEIKAPTFP…LSNELLGKLN (76 aa)) enclose the Lipoyl-binding domain. An N6-lipoyllysine modification is found at K43. The Peripheral subunit-binding (PSBD) domain occupies 112–149 (ILSPAARKLAEEAGIDPNSIAGTGKGGRVTKEDVVAAV). Residues H380 and D384 contribute to the active site.

Belongs to the 2-oxoacid dehydrogenase family. Forms a 24-polypeptide structural core with octahedral symmetry. Part of the 2-oxoglutarate dehydrogenase (OGDH) complex composed of E1 (2-oxoglutarate dehydrogenase), E2 (dihydrolipoamide succinyltransferase) and E3 (dihydrolipoamide dehydrogenase); the complex contains multiple copies of the three enzymatic components (E1, E2 and E3). (R)-lipoate is required as a cofactor.

The catalysed reaction is N(6)-[(R)-dihydrolipoyl]-L-lysyl-[protein] + succinyl-CoA = N(6)-[(R)-S(8)-succinyldihydrolipoyl]-L-lysyl-[protein] + CoA. The protein operates within amino-acid degradation; L-lysine degradation via saccharopine pathway; glutaryl-CoA from L-lysine: step 6/6. In terms of biological role, E2 component of the 2-oxoglutarate dehydrogenase (OGDH) complex which catalyzes the second step in the conversion of 2-oxoglutarate to succinyl-CoA and CO(2). In Pseudomonas aeruginosa (strain ATCC 15692 / DSM 22644 / CIP 104116 / JCM 14847 / LMG 12228 / 1C / PRS 101 / PAO1), this protein is Dihydrolipoyllysine-residue succinyltransferase component of 2-oxoglutarate dehydrogenase complex (sucB).